Reading from the N-terminus, the 387-residue chain is Phosphoglycerate kinase (387 aa).

Residues 21 to 23 (DLN), Arg-36, 59 to 62 (HLGR), Arg-113, and Arg-146 contribute to the substrate site. Residues Lys-197, Glu-314, and 340–343 (GGDT) contribute to the ATP site.

It belongs to the phosphoglycerate kinase family. Monomer.

The protein resides in the cytoplasm. The catalysed reaction is (2R)-3-phosphoglycerate + ATP = (2R)-3-phospho-glyceroyl phosphate + ADP. It participates in carbohydrate degradation; glycolysis; pyruvate from D-glyceraldehyde 3-phosphate: step 2/5. The chain is Phosphoglycerate kinase from Salmonella schwarzengrund (strain CVM19633).